The primary structure comprises 327 residues: GMP reductase (327 aa).

Catalysis depends on Cys176, which acts as the Thioimidate intermediate. Residue 205–228 (IIADGGIRTHGDIAKSIRFGASMV) participates in NADP(+) binding.

Belongs to the IMPDH/GMPR family. GuaC type 2 subfamily.

It carries out the reaction IMP + NH4(+) + NADP(+) = GMP + NADPH + 2 H(+). Its function is as follows. Catalyzes the irreversible NADPH-dependent deamination of GMP to IMP. It functions in the conversion of nucleobase, nucleoside and nucleotide derivatives of G to A nucleotides, and in maintaining the intracellular balance of A and G nucleotides. This is GMP reductase from Streptococcus agalactiae serotype III (strain NEM316).